The chain runs to 95 residues: Small ribosomal subunit protein bS6 (95 aa).

It belongs to the bacterial ribosomal protein bS6 family.

Binds together with bS18 to 16S ribosomal RNA. This Acholeplasma laidlawii (strain PG-8A) protein is Small ribosomal subunit protein bS6.